The following is a 749-amino-acid chain: MFKRTIPLFAAFTLAISPSVFPNYAYAQEDKPKTNQYWWPKMLDLSPLRQPNATSNPMGEQFNYAEEFNSLDLNAVIEDLKKLMTTSQDWWPADYGNYGPLFIRMSWHAAGTYRIYDGRGGANGGFQRFAPQNSWPDNANLDKARRLLWPIKQKYGRKISWADLLVLAGNVAMESMGFKTIGFAGGREDAWEAININWGPEGKWLESKRQDKDGKLEKPLAATVMGLIYVNPEGPNGVPDPLAAAEKIRETFGRMAMNDEETVALIAGGHAFGKTHGAASGKYLGPAPEAAGIEEQGFGWKNSYGSGKGKDTITSGLEGAWTVTPTHWSHNYLQNLFNFNWVKTKSPGGAIQWVPENSNASSMVPDAFDPSKRHAPVMLTTDLALKFDPVYSKIAKRFLDNPKEFDDAFARAWFKLIHRDMGPRSRYLGSLVPKEIMIWQDPVPPVDYKLVDANDIANLKGKILNSGLSTSELVKTAWASASTFRGTDMRGGANGARIRLSPQKDWPANDPQELAKVLKTLESIQNNFNNAQADGKKISLADLIVLGGNAAIEQAAKQAGYDIIVPFMPGRTDATQGMTDVKSFEVLEPKADGFRNYFDKSNNMSPPEMLVEKASLLKLSVPQMTVLVGGMRVLNANTGQNQYGVFTDKPGTLNNDFFVNLLSMSTEWKKSSETEGIYEGYDRKTGKLKWKATSVDLIFGANSELRAVAEAYATDDAKEKFIQDFVNAWVKVMTADRFDIKAANTNINS.

Residues 1-27 form the signal peptide; sequence MFKRTIPLFAAFTLAISPSVFPNYAYA. The tryptophyl-tyrosyl-methioninium (Trp-Tyr) (with M-255) cross-link spans 107–229; the sequence is WHAAGTYRIY…LAATVMGLIY (123 aa). H108 serves as the catalytic Proton acceptor. Positions 229 to 255 form a cross-link, tryptophyl-tyrosyl-methioninium (Tyr-Met) (with W-107); it reads YVNPEGPNGVPDPLAAAEKIRETFGRM. Residue H270 coordinates heme b.

This sequence belongs to the peroxidase family. Peroxidase/catalase subfamily. As to quaternary structure, homodimer or homotetramer. It depends on heme b as a cofactor. Formation of the three residue Trp-Tyr-Met cross-link is important for the catalase, but not the peroxidase activity of the enzyme.

It carries out the reaction H2O2 + AH2 = A + 2 H2O. The enzyme catalyses 2 H2O2 = O2 + 2 H2O. Functionally, bifunctional enzyme with both catalase and broad-spectrum peroxidase activity. The polypeptide is Catalase-peroxidase 2 (Legionella pneumophila (strain Paris)).